Reading from the N-terminus, the 490-residue chain is Betaine aldehyde dehydrogenase (490 aa).

Aspartate 93 is a binding site for K(+). 150–152 provides a ligand contact to NAD(+); sequence GAW. The active-site Charge relay system is the lysine 162. An NAD(+)-binding site is contributed by 176-179; the sequence is KPSE. Residue valine 180 coordinates K(+). 230–233 is a binding site for NAD(+); sequence GIAS. Leucine 246 is a K(+) binding site. The Proton acceptor role is filled by glutamate 252. Residues glycine 254, cysteine 286, and glutamate 387 each coordinate NAD(+). Cysteine 286 acts as the Nucleophile in catalysis. Cysteine 286 is subject to Cysteine sulfenic acid (-SOH). 2 residues coordinate K(+): lysine 457 and glycine 460. The active-site Charge relay system is glutamate 464.

It belongs to the aldehyde dehydrogenase family. As to quaternary structure, dimer of dimers. K(+) is required as a cofactor.

The catalysed reaction is betaine aldehyde + NAD(+) + H2O = glycine betaine + NADH + 2 H(+). The protein operates within amine and polyamine biosynthesis; betaine biosynthesis via choline pathway; betaine from betaine aldehyde: step 1/1. Involved in the biosynthesis of the osmoprotectant glycine betaine. Catalyzes the irreversible oxidation of betaine aldehyde to the corresponding acid. The polypeptide is Betaine aldehyde dehydrogenase (Yersinia pseudotuberculosis serotype O:1b (strain IP 31758)).